Consider the following 570-residue polypeptide: Rho GTPase-activating protein gacEE (570 aa).

The 107-residue stretch at 127–233 folds into the PH domain; that stretch reads NSDISGVLLK…WVTTINNCID (107 aa). In terms of domain architecture, C2 spans 224–343; that stretch reads WVTTINNCID…PNGSEISLWL (120 aa). Ca(2+) contacts are provided by D260, D266, D312, D314, and D320. Residues 381–567 enclose the Rho-GAP domain; sequence NSLEAIVKNR…FVFENSQQIL (187 aa).

It depends on Ca(2+) as a cofactor.

It is found in the cytoplasm. Its function is as follows. Rho GTPase-activating protein involved in the signal transduction pathway. The protein is Rho GTPase-activating protein gacEE (gacEE) of Dictyostelium discoideum (Social amoeba).